Consider the following 250-residue polypeptide: Thermostable monoacylglycerol lipase (250 aa).

F29 contacts substrate. The Nucleophile role is filled by S97. Residue M98 coordinates substrate. Active-site charge relay system residues include D196 and H226.

It belongs to the lipase/esterase LIP3/BchO family. In terms of assembly, monomer.

It catalyses the reaction Hydrolyzes glycerol monoesters of long-chain fatty acids.. Its activity is regulated as follows. Not inhibited by cholate, but slightly inhibited by triton X-100 and deoxycholate. Completely inhibited by PMSF (phenylmethylsulfonyl fluoride) at a concentration of 200 uM. Hydrolyzes monoacylglycerols, with the highest activity occurring with 1-monolauroylglycerol. This chain is Thermostable monoacylglycerol lipase, found in Bacillus sp. (strain H-257).